The primary structure comprises 463 residues: L-seryl-tRNA(Sec) selenium transferase (463 aa).

Lys-295 bears the N6-(pyridoxal phosphate)lysine mark.

It belongs to the SelA family. As to quaternary structure, homodecamer; pentamer of dimers. Binds only one seryl-tRNA(Sec) per dimer. Requires pyridoxal 5'-phosphate as cofactor.

The protein localises to the cytoplasm. The catalysed reaction is L-seryl-tRNA(Sec) + selenophosphate + H(+) = L-selenocysteinyl-tRNA(Sec) + phosphate. It functions in the pathway aminoacyl-tRNA biosynthesis; selenocysteinyl-tRNA(Sec) biosynthesis; selenocysteinyl-tRNA(Sec) from L-seryl-tRNA(Sec) (bacterial route): step 1/1. Converts seryl-tRNA(Sec) to selenocysteinyl-tRNA(Sec) required for selenoprotein biosynthesis. The chain is L-seryl-tRNA(Sec) selenium transferase from Escherichia coli (strain SMS-3-5 / SECEC).